A 916-amino-acid polypeptide reads, in one-letter code: Isoleucine--tRNA ligase (916 aa).

The short motif at 57 to 67 is the 'HIGH' region element; that stretch reads PYANGNLHMGH. An L-isoleucyl-5'-AMP-binding site is contributed by glutamate 554. The short motif at 595–599 is the 'KMSKS' region element; the sequence is KMSKS. Lysine 598 is an ATP binding site. Residues cysteine 885, cysteine 888, cysteine 905, and cysteine 908 each coordinate Zn(2+).

It belongs to the class-I aminoacyl-tRNA synthetase family. IleS type 1 subfamily. Monomer. Zn(2+) serves as cofactor.

Its subcellular location is the cytoplasm. It carries out the reaction tRNA(Ile) + L-isoleucine + ATP = L-isoleucyl-tRNA(Ile) + AMP + diphosphate. Its function is as follows. Catalyzes the attachment of isoleucine to tRNA(Ile). As IleRS can inadvertently accommodate and process structurally similar amino acids such as valine, to avoid such errors it has two additional distinct tRNA(Ile)-dependent editing activities. One activity is designated as 'pretransfer' editing and involves the hydrolysis of activated Val-AMP. The other activity is designated 'posttransfer' editing and involves deacylation of mischarged Val-tRNA(Ile). The polypeptide is Isoleucine--tRNA ligase (ileS) (Staphylococcus epidermidis (strain ATCC 35984 / DSM 28319 / BCRC 17069 / CCUG 31568 / BM 3577 / RP62A)).